The following is a 309-amino-acid chain: MALTYVFRSIRTEFSKVCTVHHAQSLHTGFPTLAAEKALLMKLRKSTGYTFINCKKALEKCDNDITKAESWLHEQAQKEGWSKASKLEGRRAKEGLIGLFVGDKAAVMVEVNCETDFVARNEKFQQLVKDVAFATMAHHSSKNQGQTGYVKSLLAAEDLSKLNLGEDASLADQLALTIGRLGENISVRRAVTVGVPAGWHIGSYIHGGVAGQSDMAMGRYGALVVFQGGKDGALDTLGRKLGQHVVGEAPVSLGNMDDLPCGDAETRLLPQSFLPDPSRTVAQYLTEQGARVLDFVRFQCGEAGSDGAH.

The protein belongs to the EF-Ts family.

It is found in the mitochondrion. Functionally, associates with the EF-Tu.GDP complex and induces the exchange of GDP to GTP. It remains bound to the aminoacyl-tRNA.EF-Tu.GTP complex up to the GTP hydrolysis stage on the ribosome. The sequence is that of Elongation factor Ts, mitochondrial (tsfm) from Salmo salar (Atlantic salmon).